A 340-amino-acid chain; its full sequence is Major histocompatibility complex class I-related protein 1 (340 aa).

Positions 1-22 (MGELTAFLLPLIIVLMVKHSNS) are cleaved as a signal peptide. Residues 23-109 (RTHSLRYFRL…KRLQRHYNHS (87 aa)) are alpha-1. The antigen-binding cleft stretch occupies residues 23–201 (RTHSLRYFRL…EYGKDTLQRT (179 aa)). Over 23–302 (RTHSLRYFRL…QESEAIPLVM (280 aa)) the chain is Extracellular. Positions 29 and 31 each coordinate 8-(9H-purin-6-yl)-2-oxa-8-azabicyclo[3.3.1]nona-3,6-diene-4,6-dicarbaldehyde. The 5-(2-oxoethylideneamino)-6-(D-ribitylamino)uracil site is built by R31, S46, and K65. Positions 31, 46, and 65 each coordinate 5-(2-oxopropylideneamino)-6-(D-ribitylamino)uracil. Residues R31, S46, and K65 each contribute to the 7-hydroxy-6-methyl-8-(1-D-ribityl)lumazine site. The 8-(9H-purin-6-yl)-2-oxa-8-azabicyclo[3.3.1]nona-3,6-diene-4,6-dicarbaldehyde site is built by K65 and H80. Residue K65 coordinates 2-amino-4-oxopteridine-6-carbaldehyde. Pyridoxal is bound at residue K65. A glycan (N-linked (GlcNAc...) asparagine) is linked at N107. The segment at 110 to 201 (GSHTYQRMIG…EYGKDTLQRT (92 aa)) is alpha-2. 8-(9H-purin-6-yl)-2-oxa-8-azabicyclo[3.3.1]nona-3,6-diene-4,6-dicarbaldehyde is bound at residue R116. 5-(2-oxoethylideneamino)-6-(D-ribitylamino)uracil is bound by residues R116, Y174, and Q175. 5-(2-oxopropylideneamino)-6-(D-ribitylamino)uracil is bound by residues R116, Y174, and Q175. Residues R116, Y174, and Q175 each coordinate 7-hydroxy-6-methyl-8-(1-D-ribityl)lumazine. Intrachain disulfides connect C120–C183 and C222–C278. The alpha-3 stretch occupies residues 202–293 (EPPLVRVNRK…GVHVVLQVPQ (92 aa)). The 80-residue stretch at 203–282 (PPLVRVNRKE…SNLYSCHVEH (80 aa)) folds into the Ig-like C1-type domain. Residues 294 to 302 (ESEAIPLVM) form a connecting peptide region. The chain crosses the membrane as a helical span at residues 303–323 (KAVSGSIVFVIVLAGVGVLVW). Residues 324 to 340 (RRRPREQNGAVYLPTPD) lie on the Cytoplasmic side of the membrane.

This sequence belongs to the MHC class I family. In terms of assembly, heterotrimer that consists of MR1, B2M and metabolite antigen. Major classes of metabolite ligands presented by MR1 include riboflavin-related antigens, pyrimidines and ribityl lumazines, nucleobase adducts and folate derivatives. Forms reversible covalent Schiff base complexes with microbial pyrimidine-based metabolite, which serves as a molecular switch triggering complete folding, stable association with B2M and translocation of the ternary complex from endoplasmic reticulum to the plasma membrane. Alternatively, forms non-Schiff base complexes with ribityl lumazines. On antigen-presenting cells, the ternary complex interacts with TCR on MR1-restricted T cells. Interacts with TAPBP and TAPBPL chaperones in the endoplasmic reticulum. TAPBP associated or not with MHC class I peptide loading complex binds ligand-free MR1 or MR1-B2M complex, providing for stable MR1 pools ready for metabolite antigen processing. TAPBPL interacts with MR1 in a ligand-independent way; this interaction may stabilize MR1 pool and facilitate ligand loading and dissociation. Structurally, MR1-B2M heterodimer adopts a topology similar to classical MHC class I molecules, with alpha-1 and alpha-2 domains of MR1 forming the antigen-binding cleft composed of two alpha-helices resting on a floor of 7-stranded anti-parallel beta-pleated sheet. MR1-B2M heterodimer (via alpha-helices) interacts with TCR (via CDR domains). Post-translationally, N-glycosylated.

It localises to the cell membrane. It is found in the endoplasmic reticulum membrane. The protein resides in the golgi apparatus membrane. Its subcellular location is the early endosome membrane. The protein localises to the late endosome membrane. Its function is as follows. Antigen-presenting molecule specialized in displaying microbial pyrimidine-based metabolites to alpha-beta T cell receptors (TCR) on innate-type mucosal-associated invariant T (MAIT) cells. In complex with B2M preferentially presents riboflavin-derived metabolites to semi-invariant TCRs on MAIT cells, guiding immune surveillance of the microbial metabolome at mucosal epithelial barriers. Signature pyrimidine-based microbial antigens are generated via non-enzymatic condensation of metabolite intermediates of the riboflavin pathway with by-products arising from other metabolic pathways such as glycolysis. Typical potent antigenic metabolites are 5-(2-oxoethylideneamino)-6-D-ribitylaminouracil (5-OE-RU) and 5-(2-oxopropylideneamino)-6-D-ribitylaminouracil (5-OP-RU), products of condensation of 5-amino-6-D-ribityaminouracil (5-A-RU) with glyoxal or methylglyoxal by-products, respectively. May present microbial antigens to various MAIT cell subsets, providing for unique recognition of diverse microbes, including pathogens that do not synthesize riboflavin. Upon antigen recognition, elicits rapid innate-type MAIT cell activation to eliminate pathogenic microbes by directly killing infected cells. During T cell development, drives thymic selection and post-thymic terminal differentiation of MAIT cells in a process dependent on commensal microflora. Acts as an immune sensor of cancer cell metabolome. May present a tumor-specific or -associated metabolite essential for cancer cell survival to a pan-cancer TCR on a non-MAIT CD8-positive T cell clone, triggering T cell-mediated killing of a wide range of cancer cell types. May present tumor-enriched pyridoxal and pyridoxal 5'-phosphate antigens, enabling preferential recognition of cancer cells. Presents nucleobase carbonyl adducts generated during oxidative stress. Captures M3Ade, a nucleobase adduct composed of one adenine modified by a malondialdehyde trimer, for recognition by MR1-restricted T cell clones expressing a polyclonal TCR repertoire. This Pongo abelii (Sumatran orangutan) protein is Major histocompatibility complex class I-related protein 1.